A 36-amino-acid chain; its full sequence is Kappa-theraphotoxin-Pg1b (36 aa).

3 disulfides stabilise this stretch: Cys-4–Cys-19, Cys-11–Cys-24, and Cys-18–Cys-31.

It belongs to the neurotoxin 10 (Hwtx-1) family. 44 (Jztx-4) subfamily. As to expression, expressed by the venom gland.

The protein localises to the secreted. Gating modifier of Kv2.1/KCNB1, Kv2.2/KCNB2 and Kv4.3/KCND3 channels. The sequence is that of Kappa-theraphotoxin-Pg1b from Chilobrachys guangxiensis (Chinese earth tiger tarantula).